Consider the following 38-residue polypeptide: Humanin-like protein (38 aa).

In terms of tissue distribution, in the testis, expressed in Leydig cells at 10, 20 and 60 days of age (at protein level). Also expressed in pachytene spermatocytes at day 20 and in vessels, peritubular cells and spermatids at day 60. Not detected in Sertoli cells (at protein level). In the adult ovary, expressed in stromal cells, granulosa cells, theca cells and oocytes at diestrus and proestrus (at protein level). Expressed in the anterior pituitary where it is detected in lactotropes and somatotropes with lower levels in females than males (at protein level). In the hippocampus, expressed in astrocytes but not in neurons or oligodendrocytes (at protein level). Expressed in muscle, liver and hypothalamus but not in epididymal fat (at protein level). Widely expressed with highest levels in cardiac and skeletal muscle and lowest levels in lung, testis and uterus. In the CNS, levels are relatively high in the cerebellum and cortex and low in the hippocampus. In the hippocampus, lower levels are detected in ovariectomized animals than in controls.

It is found in the mitochondrion. Its subcellular location is the secreted. The protein resides in the cytoplasm. Its function is as follows. Plays a role as a neuroprotective factor. Protects against neuronal cell death induced by amyloid-beta peptides. Also protects against excitotoxic cell death. Prevents amyloid-beta peptide-induced spatial learning and memory impairments, protects against amyloid-beta peptide-induced suppression of hippocampal long-term potentiation, and inhibits amyloid-beta peptide-induced activation of STAT3 and inhibition of CASP3. Prevents glutamate-induced dendritic atrophy in hippocampal neurons and also prevents glutamate-induced decrease in SYP puncta number and total puncta area. Protects anterior pituitary cells from TNF-induced apoptosis. Plays a role in ovarian follicle development by acting as a cryoprotective factor for granulosa cells in the antral follicle. Increases androgen production in Leydig cells and promotes Leydig cell survival by preventing apoptosis. This chain is Humanin-like protein, found in Rattus norvegicus (Rat).